The primary structure comprises 178 residues: MINAQAFGMALFQLSEEEKKVKKVYDQSHDFLKLARNFKDGSLAALLNAYTLTKKEKLKLIDKLFKNHFCDLFVDFLKTIVLKGYFNLVEQALKYFFDCVENEKHVQFIRIITAFELSAPQLKRIVAAMEKKLNSKIVYKTEIDKSLISGIRIESSAQLFEKNIRDQLSRLMEQFKGN.

This sequence belongs to the ATPase delta chain family. As to quaternary structure, F-type ATPases have 2 components, F(1) - the catalytic core - and F(0) - the membrane proton channel. F(1) has five subunits: alpha(3), beta(3), gamma(1), delta(1), epsilon(1). F(0) has three main subunits: a(1), b(2) and c(10-14). The alpha and beta chains form an alternating ring which encloses part of the gamma chain. F(1) is attached to F(0) by a central stalk formed by the gamma and epsilon chains, while a peripheral stalk is formed by the delta and b chains.

Its subcellular location is the cell membrane. Its function is as follows. F(1)F(0) ATP synthase produces ATP from ADP in the presence of a proton or sodium gradient. F-type ATPases consist of two structural domains, F(1) containing the extramembraneous catalytic core and F(0) containing the membrane proton channel, linked together by a central stalk and a peripheral stalk. During catalysis, ATP synthesis in the catalytic domain of F(1) is coupled via a rotary mechanism of the central stalk subunits to proton translocation. Functionally, this protein is part of the stalk that links CF(0) to CF(1). It either transmits conformational changes from CF(0) to CF(1) or is implicated in proton conduction. The chain is ATP synthase subunit delta from Mycoplasma pneumoniae (strain ATCC 29342 / M129 / Subtype 1) (Mycoplasmoides pneumoniae).